Here is a 146-residue protein sequence, read N- to C-terminus: Hemoglobin subunit beta-2 (146 aa).

Valine 1 carries the post-translational modification N-acetylvaline. One can recognise a Globin domain in the interval 2 to 146 (HLHGDEKAAV…VASALAHKYH (145 aa)). The residue at position 17 (lysine 17) is an N6-succinyllysine. Serine 44 carries the post-translational modification Phosphoserine. An N6-succinyllysine modification is found at lysine 59. Residues histidine 63 and histidine 92 each coordinate heme b. The residue at position 104 (arginine 104) is an Asymmetric dimethylarginine. A Phosphothreonine modification is found at threonine 123.

Belongs to the globin family. As to quaternary structure, heterotetramer of two alpha chains and two beta chains. As to expression, red blood cells.

Functionally, involved in oxygen transport from the lung to the various peripheral tissues. The sequence is that of Hemoglobin subunit beta-2 (HBB2) from Tapirus terrestris (Lowland tapir).